The following is a 686-amino-acid chain: ATP-dependent zinc metalloprotease FtsH 1 (686 aa).

Residues 1–33 (MCFCIVSSPEAMHSNADSPSSGPGLQPVWTTLR) lie on the Cytoplasmic side of the membrane. The helical transmembrane segment at 34 to 54 (SPYVFWIGGAILLALLVHLGI) threads the bilayer. Over 55 to 164 (KWQQASAPVR…TFAATQESDW (110 aa)) the chain is Periplasmic. A helical membrane pass occupies residues 165 to 185 (VGTLLLWGLPLGLIVGIWLFF). Over 186 to 686 (MRRMATGGRE…AEGASPSSQG (501 aa)) the chain is Cytoplasmic. ATP is bound at residue 257-264 (GPPGTGKT). Residue H479 coordinates Zn(2+). E480 is an active-site residue. Residues H483 and D555 each contribute to the Zn(2+) site. Positions 661 to 686 (YAWLKEGDGTSRNSASAEGASPSSQG) are disordered. A compositionally biased stretch (polar residues) spans 670-686 (TSRNSASAEGASPSSQG).

This sequence in the central section; belongs to the AAA ATPase family. In the C-terminal section; belongs to the peptidase M41 family. As to quaternary structure, homohexamer. Requires Zn(2+) as cofactor.

The protein resides in the cell inner membrane. Its function is as follows. Acts as a processive, ATP-dependent zinc metallopeptidase for both cytoplasmic and membrane proteins. Plays a role in the quality control of integral membrane proteins. This chain is ATP-dependent zinc metalloprotease FtsH 1, found in Salinibacter ruber (strain M8).